The sequence spans 211 residues: Thiamine-phosphate synthase (211 aa).

Residues 37-41 and N69 contribute to the 4-amino-2-methyl-5-(diphosphooxymethyl)pyrimidine site; that span reads QLRIK. Residues D70 and D89 each contribute to the Mg(2+) site. S108 contributes to the 4-amino-2-methyl-5-(diphosphooxymethyl)pyrimidine binding site. Residue 134-136 participates in 2-[(2R,5Z)-2-carboxy-4-methylthiazol-5(2H)-ylidene]ethyl phosphate binding; it reads TQT. K137 lines the 4-amino-2-methyl-5-(diphosphooxymethyl)pyrimidine pocket. Residues G166 and 186–187 contribute to the 2-[(2R,5Z)-2-carboxy-4-methylthiazol-5(2H)-ylidene]ethyl phosphate site; that span reads VS.

This sequence belongs to the thiamine-phosphate synthase family. Mg(2+) serves as cofactor.

It carries out the reaction 2-[(2R,5Z)-2-carboxy-4-methylthiazol-5(2H)-ylidene]ethyl phosphate + 4-amino-2-methyl-5-(diphosphooxymethyl)pyrimidine + 2 H(+) = thiamine phosphate + CO2 + diphosphate. The enzyme catalyses 2-(2-carboxy-4-methylthiazol-5-yl)ethyl phosphate + 4-amino-2-methyl-5-(diphosphooxymethyl)pyrimidine + 2 H(+) = thiamine phosphate + CO2 + diphosphate. The catalysed reaction is 4-methyl-5-(2-phosphooxyethyl)-thiazole + 4-amino-2-methyl-5-(diphosphooxymethyl)pyrimidine + H(+) = thiamine phosphate + diphosphate. It participates in cofactor biosynthesis; thiamine diphosphate biosynthesis; thiamine phosphate from 4-amino-2-methyl-5-diphosphomethylpyrimidine and 4-methyl-5-(2-phosphoethyl)-thiazole: step 1/1. Condenses 4-methyl-5-(beta-hydroxyethyl)thiazole monophosphate (THZ-P) and 2-methyl-4-amino-5-hydroxymethyl pyrimidine pyrophosphate (HMP-PP) to form thiamine monophosphate (TMP). The sequence is that of Thiamine-phosphate synthase from Salmonella schwarzengrund (strain CVM19633).